The following is a 1040-amino-acid chain: Nucleotide-binding oligomerization domain-containing protein 2 (1040 aa).

CARD domains lie at 26 to 122 and 126 to 218; these read CEMC…LHGC and HSLH…EAAT. Positions 63 to 77 match the ATG16L1-binding motif motif; that stretch reads WEVLSWEDYEGFHLL. Positions 239, 252, 253, 302, 303, 304, 305, 306, and 307 each coordinate ADP. Residues 241 to 274 are required for CARD9 binding; the sequence is DGAETLCLEDIYTENVLEVWADVGMAGPPQKSPA. Residues 293-618 form the NACHT domain; that stretch reads DTVLVVGEAG…FFAAFYLALS (326 aa). 299-306 is a binding site for ATP; it reads GEAGSGKS. Cys395 carries S-palmitoyl cysteine lipidation. His603 serves as a coordination point for ADP. LRR repeat units lie at residues 791–812, 816–839, 844–865, 872–884, 900–920, 928–949, 956–976, 984–1005, and 1012–1032; these read RPVA…QLLP, VCKA…IECA, QLQK…SMAK, NFLA…NYIT, SLQF…QALA, SLRW…ALAL, MLEE…CSLA, SLKI…ALLQ, and TILE…DKLG. Residue Cys1033 is the site of S-palmitoyl cysteine attachment.

It belongs to the NOD1-NOD2 family. Homooligomer: homooligomerizes following muramyl dipeptide (MDP)-binding, promoting RIPK2 recruitment. Interacts (via CARD domain) with RIPK2 (via CARD domain). Following RIPK2 recruitment, RIPK2 homooligomerizes via its CARD domain and forms long filaments named RIPosomes. Interacts (via CARD domain) with ubiquitin; inhibiting interaction with RIPK2. Component of a signaling complex consisting of ARHGEF2, NOD2 and RIPK2. Interacts with ANKRD17 (via N-terminus). Interacts with HSPA1A; the interaction enhances NOD2 stability. Interacts (via both CARD domains) with HSP90; the interaction enhances NOD2 stability. Interacts (via CARD domain) with SOCS3; the interaction promotes NOD2 degradation. Interacts (via CARD domain) with ERBIN; the interaction inhibits activation of NOD2. Interacts with MAPKBP1; the interaction is enhanced in the presence of muramyl dipeptide (MDP) and inhibits NOD2 homooligomerization and activation. Interacts with INAVA; the interaction takes place upon Pattern recognition receptor (PRR) stimulation. Interacts (via NACHT domain) with CARD9. Interacts (via CARD domain) with CASP1; this interaction leads to IL1B processing. Also interacts with CASP4. Interacts with NLRP1; this interaction is enhanced in the presence of muramyl dipeptide (MDP) and leads to increased IL1B release. Interacts with NLRP12; this interaction promotes degradation of NOD2 through the ubiquitin-proteasome pathway. Interacts with ANKHD1, C10orf67, CHMP5, DOCK7, ENTR1, KRT15, LDOC1, PPP1R12C, PPP2R3B, TRIM41 and VIM. Interacts with MAVS; interaction takes place following single-stranded RNA (ssRNA)-binding. Interacts with ATG16L1. Interacts with IRGM; promoting IRGM 'Lys-63'-linked polyubiquitination, which is required for interactions with the core autophagy factors. Palmitoylated by ZDHHC5; palmitoylation is required for proper recruitment to the bacterial entry site and hence for proper signaling upon cognate peptidoglycan detection. Palmitoylation promotes localization to the cell membrane. Palmitoylation protects from SQSTM1/p62-dependent autophagic degradation. In terms of processing, polyubiquitinated by TRIM27, leading to proteasome-mediated degradation. Polyubiquitinated and degraded following muramyl dipeptide (MDP) stimulation, conferring MDP tolerance and preventing septic shock. Post-translationally, degraded via selective autophagy following interaction with IRGM. IRGM promotes NOD2-RIPK2 RIPosome recruitment to autophagosome membranes, promoting their SQSTM1/p62-dependent autophagic degradation. O-glycosylated by OGT, O-GlcNAcylation increases protein stability. As to expression, expressed in monocytes, macrophages, dendritic cells, hepatocytes, preadipocytes, epithelial cells of oral cavity, lung and intestine, with higher expression in ileal Paneth cells and in intestinal stem cells. In terms of tissue distribution, expressed at higher level in leukocytes.

It localises to the cell membrane. The protein localises to the basolateral cell membrane. It is found in the cytoplasm. Its subcellular location is the mitochondrion. With respect to regulation, ADP-binding promotes an inactive closed conformation. In terms of biological role, pattern recognition receptor (PRR) that detects bacterial peptidoglycan fragments and other danger signals and plays an important role in gastrointestinal immunity. Specifically activated by muramyl dipeptide (MDP), a fragment of bacterial peptidoglycan found in every bacterial peptidoglycan type. NOD2 specifically recognizes and binds 6-O-phospho-MDP, the phosphorylated form of MDP, which is generated by NAGK. 6-O-phospho-MDP-binding triggers oligomerization that facilitates the binding and subsequent activation of the proximal adapter receptor-interacting RIPK2. Following recruitment, RIPK2 undergoes 'Met-1'- (linear) and 'Lys-63'-linked polyubiquitination by E3 ubiquitin-protein ligases XIAP, BIRC2, BIRC3 and the LUBAC complex, becoming a scaffolding protein for downstream effectors, triggering activation of the NF-kappa-B and MAP kinases signaling. This in turn leads to the transcriptional activation of hundreds of genes involved in immune response. Its ability to detect bacterial MDP plays a central role in maintaining the equilibrium between intestinal microbiota and host immune responses to control inflammation. An imbalance in this relationship results in dysbiosis, whereby pathogenic bacteria prevail on commensals, causing damage in the intestinal epithelial barrier as well as allowing bacterial invasion and inflammation. Acts as a regulator of appetite by sensing MDP in a subset of brain neurons: microbiota-derived MDP reach the brain, where they bind and activate NOD2 in inhibitory hypothalamic neurons, decreasing neuronal activity, thereby regulating satiety and body temperature. NOD2-dependent MDP-sensing of bacterial cell walls in the intestinal epithelial compartment contributes to sustained postnatal growth upon undernutrition. Also plays a role in antiviral response by acting as a sensor of single-stranded RNA (ssRNA) from viruses: upon ssRNA-binding, interacts with MAVS, leading to activation of interferon regulatory factor-3/IRF3 and expression of type I interferon. Also acts as a regulator of autophagy in dendritic cells via its interaction with ATG16L1, possibly by recruiting ATG16L1 at the site of bacterial entry. NOD2 activation in the small intestine crypt also contributes to intestinal stem cells survival and function: acts by promoting mitophagy via its association with ATG16L1. In addition to its main role in innate immunity, also regulates the adaptive immune system by acting as regulator of helper T-cell and regulatory T-cells (Tregs). Besides recognizing pathogens, also involved in the endoplasmic reticulum stress response: acts by sensing and binding to the cytosolic metabolite sphingosine-1-phosphate generated in response to endoplasmic reticulum stress, initiating an inflammation process that leads to activation of the NF-kappa-B and MAP kinases signaling. May also be involved in NLRP1 activation following activation by MDP, leading to CASP1 activation and IL1B release in macrophages. Functionally, acts as a pattern recognition receptor (PRR); able to activate NF-kappa-B. Its function is as follows. Can activate NF-kappa-B in a muramyl dipeptide (MDP)-independent manner. This Homo sapiens (Human) protein is Nucleotide-binding oligomerization domain-containing protein 2.